The primary structure comprises 1788 residues: U3 small nucleolar RNA-associated protein 10 (1788 aa).

Residues 585–622 (LDFQAVVPYAIVALSDPAKKVRRAAAELVTVLGSFYET) form an HEAT 1 repeat. Positions 884-905 (PATKRRRVGSSEKSVDSQSPAD) are disordered. HEAT repeat units follow at residues 926 to 962 (AKHP…LVLS), 1049 to 1086 (QTVK…AYEH), 1257 to 1294 (LSIA…SESI), 1301 to 1339 (EALL…KYGK), 1703 to 1740 (EHHK…RLGE), and 1744 to 1781 (QSLP…TLGE).

It belongs to the HEATR1/UTP10 family. Component of the ribosomal small subunit (SSU) processome.

It localises to the nucleus. Its subcellular location is the nucleolus. In terms of biological role, involved in nucleolar processing of pre-18S ribosomal RNA. Involved in ribosome biosynthesis. The chain is U3 small nucleolar RNA-associated protein 10 (rbg-5) from Neurospora crassa (strain ATCC 24698 / 74-OR23-1A / CBS 708.71 / DSM 1257 / FGSC 987).